Reading from the N-terminus, the 726-residue chain is uncharacterized protein (726 aa).

The Thioredoxin domain occupies 10–135 (MRISWVVAFI…LLDFVETHLN (126 aa)). 2 disordered regions span residues 133 to 153 (HLNP…TDED) and 227 to 280 (VTSV…NPTG). A compositionally biased stretch (acidic residues) spans 138–153 (TDPDIPSDEDVLTDED). The chain crosses the membrane as a helical span at residues 675–695 (IRVLYMVLGIVTVGILVWYFS). Phosphoserine is present on S708.

Its subcellular location is the membrane. This is an uncharacterized protein from Schizosaccharomyces pombe (strain 972 / ATCC 24843) (Fission yeast).